The chain runs to 437 residues: Magnetosome protein MamN (437 aa).

Transmembrane regions (helical) follow at residues 26–46 (LAVL…GSYT), 53–73 (SVYF…ALLA), 95–115 (WILV…NSLV), 136–156 (VPVI…TMIG), 174–194 (FIAG…VFFE), 226–246 (LLSY…LAGP), 252–268 (GWIA…LGRF), 281–301 (DILF…VGIL), 320–340 (AILL…GTSA), 358–378 (AAWW…LPGA), and 416–436 (WGMP…AVLV).

It belongs to the arsenite-antimonite (ArsB) efflux (TC 2.A.45) family.

The protein resides in the magnetosome membrane. Its function is as follows. Plays a role in biomineralization; might regulate pH in the magnetosome. This is Magnetosome protein MamN (mamN) from Paramagnetospirillum magneticum (strain ATCC 700264 / AMB-1) (Magnetospirillum magneticum).